Consider the following 518-residue polypeptide: Nif-specific regulatory protein (518 aa).

Residues 35–176 (NTARALAAIL…MVANLISQPL (142 aa)) form the GAF domain. The Sigma-54 factor interaction domain maps to 205–432 (VGKSQAMRQT…LENCLERASV (228 aa)). Residues 232–239 (GESGTGKE) and 295–304 (ADGGTLFLDE) each bind ATP. An inter-domain linker region spans residues 433–475 (MTDEGLIDRDVILFNHHESPALSVKPGLPLATDESWLDQELDE). Positions 476-518 (RQRVIAALEKTGWVQAKAARLLGMTPRQIAYRIQIMDINMHRI) are C-terminal DNA-binding domain. Residues 490 to 509 (QAKAARLLGMTPRQIAYRIQ) constitute a DNA-binding region (H-T-H motif).

In terms of assembly, interacts with sigma-54.

Required for activation of most nif operons, which are directly involved in nitrogen fixation. The protein is Nif-specific regulatory protein (nifA) of Enterobacter agglomerans (Erwinia herbicola).